The chain runs to 166 residues: MGRYSVKRYKTKRRTRDLDLIYNDLSTKESVQKLLNQPLDETKPGLGQHYCIHCAKYMETAIALKTHLKGKVHKRRVKELRGVPYTQEVSDAAAGYNLNKFLNRVQEITQSVGPEKESNEALLKEHLDSTLANVKTTEPTLPWAAADAEANTAAVTEAESTASAST.

The Nuclear localization signal motif lies at 7-16 (KRYKTKRRTR). The tract at residues 17–31 (DLDLIYNDLSTKESV) is nuclear export signal-like (NES-like). The segment at 49 to 73 (HYCIHCAKYMETAIALKTHLKGKVH) adopts a C2H2-type zinc-finger fold.

This sequence belongs to the ZNF593/BUD20 C2H2-type zinc-finger protein family. Associates with pre-60S ribosomal particles; released from the pre-60S particle very early in the cytoplasm.

It is found in the nucleus. It localises to the cytoplasm. In terms of biological role, involved in pre-60S ribosomal particles maturation by promoting the nuclear export of the 60S ribosome. Involved in positioning the proximal bud pole signal. The sequence is that of Bud site selection protein 20 from Saccharomyces cerevisiae (strain ATCC 204508 / S288c) (Baker's yeast).